The sequence spans 89 residues: Small ribosomal subunit protein uS15 (89 aa).

Belongs to the universal ribosomal protein uS15 family. Part of the 30S ribosomal subunit. Forms a bridge to the 50S subunit in the 70S ribosome, contacting the 23S rRNA.

One of the primary rRNA binding proteins, it binds directly to 16S rRNA where it helps nucleate assembly of the platform of the 30S subunit by binding and bridging several RNA helices of the 16S rRNA. In terms of biological role, forms an intersubunit bridge (bridge B4) with the 23S rRNA of the 50S subunit in the ribosome. The chain is Small ribosomal subunit protein uS15 from Ralstonia nicotianae (strain ATCC BAA-1114 / GMI1000) (Ralstonia solanacearum).